The sequence spans 255 residues: RNA polymerase sigma-F factor (255 aa).

Residues 61-74 (DLFQIGCIGLLKSV) carry the Polymerase core binding motif. A DNA-binding region (H-T-H motif) is located at residues 221-240 (QSEVADRLGISQVQVSRLEK).

It belongs to the sigma-70 factor family.

Functionally, sigma factors are initiation factors that promote the attachment of RNA polymerase to specific initiation sites and are then released. This sigma factor is responsible for the expression of sporulation specific genes. This is RNA polymerase sigma-F factor (sigF) from Bacillus licheniformis.